Here is an 86-residue protein sequence, read N- to C-terminus: Exodeoxyribonuclease 7 small subunit (86 aa).

The protein belongs to the XseB family. Heterooligomer composed of large and small subunits.

Its subcellular location is the cytoplasm. It catalyses the reaction Exonucleolytic cleavage in either 5'- to 3'- or 3'- to 5'-direction to yield nucleoside 5'-phosphates.. Its function is as follows. Bidirectionally degrades single-stranded DNA into large acid-insoluble oligonucleotides, which are then degraded further into small acid-soluble oligonucleotides. This chain is Exodeoxyribonuclease 7 small subunit, found in Bacillus licheniformis (strain ATCC 14580 / DSM 13 / JCM 2505 / CCUG 7422 / NBRC 12200 / NCIMB 9375 / NCTC 10341 / NRRL NRS-1264 / Gibson 46).